The primary structure comprises 1480 residues: Cystic fibrosis transmembrane conductance regulator (1480 aa).

Residues Met-1 to Phe-77 lie on the Cytoplasmic side of the membrane. Residues Phe-78 to Gln-98 form a helical membrane-spanning segment. The ABC transmembrane type-1 1 domain maps to Phe-81–Leu-365. At Pro-99 to Tyr-122 the chain is on the extracellular side. A helical transmembrane segment spans residues Leu-123–His-146. Over His-147–Leu-195 the chain is Cytoplasmic. The helical transmembrane segment at Ala-196–Trp-216 threads the bilayer. Topologically, residues Glu-217 to Ser-222 are extracellular. A helical transmembrane segment spans residues Val-223–Met-243. Topologically, residues Met-244 to Lys-298 are cytoplasmic. The chain crosses the membrane as a helical span at residues Ala-299 to Phe-319. Residues Leu-320–Thr-339 lie on the Extracellular side of the membrane. Residues Ile-340–Val-358 traverse the membrane as a helical segment. Residues Gln-359–Ser-858 lie on the Cytoplasmic side of the membrane. Residues Trp-401, Ser-434, Gly-458–Thr-465, and Gln-493 contribute to the ATP site. The 224-residue stretch at Asn-423–Gly-646 folds into the ABC transporter 1 domain. Residue Cys-524 is the site of S-palmitoyl cysteine attachment. Phosphoserine is present on residues Ser-549 and Ser-660. Positions Ser-654 to Glu-831 are disordered R region. Ser-670 carries the phosphoserine; by PKA modification. Ser-686 is modified (phosphoserine). A Glycyl lysine isopeptide (Lys-Gly) (interchain with G-Cter in ubiquitin) cross-link involves residue Lys-688. Ser-700 and Ser-712 each carry phosphoserine. Thr-717 carries the phosphothreonine modification. Ser-737, Ser-753, Ser-768, Ser-790, Ser-795, and Ser-813 each carry phosphoserine. A helical membrane pass occupies residues Leu-859–Val-879. One can recognise an ABC transmembrane type-1 2 domain in the interval Leu-859–Ser-1155. At Val-880–Ile-918 the chain is on the extracellular side. N-linked (GlcNAc...) asparagine glycans are attached at residues Asn-894, Asn-900, and Asn-909. A discontinuously helical transmembrane segment spans residues Tyr-919–His-939. Topologically, residues Thr-940–Thr-990 are cytoplasmic. The chain crosses the membrane as a helical span at residues Ile-991–Leu-1011. The Extracellular portion of the chain corresponds to Gln-1012 to Pro-1013. A helical membrane pass occupies residues Tyr-1014–Leu-1034. At Gln-1035–Thr-1095 the chain is on the cytoplasmic side. Residues Leu-1096–Phe-1116 traverse the membrane as a helical segment. At Ile-1117 to Gly-1130 the chain is on the extracellular side. The helical transmembrane segment at Ile-1131–Ile-1151 threads the bilayer. Residues Asp-1152–Leu-1480 are Cytoplasmic-facing. In terms of domain architecture, ABC transporter 2 spans Met-1210–His-1443. ATP is bound by residues Tyr-1219 and Gly-1244–Ser-1251. Positions Arg-1386 to Leu-1480 are interaction with GORASP2. A lipid anchor (S-palmitoyl cysteine) is attached at Cys-1395. A phosphoserine mark is found at Ser-1444 and Ser-1456. The tract at residues His-1452–Leu-1480 is disordered. Residues Glu-1470 to Leu-1480 show a composition bias toward acidic residues. The PDZ-binding motif lies at Thr-1478 to Leu-1480.

This sequence belongs to the ABC transporter superfamily. ABCC family. CFTR transporter (TC 3.A.1.202) subfamily. As to quaternary structure, monomer; does not require oligomerization for channel activity. May form oligomers in the membrane. Interacts with SLC26A3, SLC26A6 and NHERF1. Interacts with SHANK2. Interacts with MYO6. Interacts (via C-terminus) with GOPC (via PDZ domain); this promotes CFTR internalization and thereby decreases channel activity. Interacts with SLC4A7 through NHERF1. Found in a complex with MYO5B and RAB11A. Interacts with ANO1. Interacts with SLC26A8. Interacts with AHCYL1; the interaction increases CFTR activity. Interacts with CSE1L. The core-glycosylated form interacts with GORASP2 (via PDZ GRASP-type 1 domain) in respone to ER stress. Interacts with MARCHF2; the interaction leads to CFTR ubiqtuitination and degradation. Interacts with ADGRG2. Post-translationally, N-glycosylated. Phosphorylated; cAMP treatment promotes phosphorylation and activates the channel. Dephosphorylation decreases the ATPase activity (in vitro). Phosphorylation at PKA sites activates the channel. Phosphorylation at PKC sites enhances the response to phosphorylation by PKA. Phosphorylated by AMPK; this inhibits channel activity. In terms of processing, ubiquitinated, leading to its degradation in the lysosome. Deubiquitination by USP10 in early endosomes enhances its endocytic recycling to the cell membrane. Ubiquitinated by RNF185 during ER stress. Ubiquitinated by MARCHF2.

The protein resides in the apical cell membrane. It localises to the early endosome membrane. It is found in the cell membrane. Its subcellular location is the recycling endosome membrane. The protein localises to the endoplasmic reticulum membrane. The protein resides in the nucleus. The enzyme catalyses ATP + H2O + closed Cl(-) channel = ADP + phosphate + open Cl(-) channel.. It catalyses the reaction chloride(in) = chloride(out). The catalysed reaction is hydrogencarbonate(in) = hydrogencarbonate(out). It carries out the reaction ATP + H2O = ADP + phosphate + H(+). Functionally, epithelial ion channel that plays an important role in the regulation of epithelial ion and water transport and fluid homeostasis. Mediates the transport of chloride ions across the cell membrane. Possesses an intrinsic ATPase activity and utilizes ATP to gate its channel; the passive flow of anions through the channel is gated by cycles of ATP binding and hydrolysis by the ATP-binding domains. The ion channel is also permeable to HCO(3)(-); selectivity depends on the extracellular chloride concentration. Exerts its function also by modulating the activity of other ion channels and transporters. Contributes to the regulation of the pH and the ion content of the epithelial fluid layer. Modulates the activity of the epithelial sodium channel (ENaC) complex, in part by regulating the cell surface expression of the ENaC complex. May regulate bicarbonate secretion and salvage in epithelial cells by regulating the transporter SLC4A7. Can inhibit the chloride channel activity of ANO1. Plays a role in the chloride and bicarbonate homeostasis during sperm epididymal maturation and capacitation. The polypeptide is Cystic fibrosis transmembrane conductance regulator (Plecturocebus moloch (Dusky titi monkey)).